The chain runs to 221 residues: Ras-related protein Rab-27A (221 aa).

Ser-2 carries the post-translational modification N-acetylserine. Residue Ser-2 is modified to Phosphoserine. 16-24 (GDSGVGKTS) lines the GTP pocket. An Effector region motif is present at residues 38-46 (FITTVGIDF). Residues 74–78 (DTAGQ), 133–136 (NKSD), and 163–165 (SAA) each bind GTP. The cysteines at positions 123 and 188 are disulfide-linked. 2 S-geranylgeranyl cysteine lipidation sites follow: Cys-219 and Cys-221. Cys-221 carries the cysteine methyl ester modification.

It belongs to the small GTPase superfamily. Rab family. In terms of assembly, binds SYTL1, SYTL2, SLAC2B, MYRIP, SYTL3, SYTL4, SYTL5 and MLPH. Interacts with UNC13D. Interacts with RPH3A and RPH3A. Does not interact with the BLOC-3 complex (heterodimer of HPS1 and HPS4). Interacts (GDP-bound form preferentially) with DENND10. In terms of tissue distribution, detected in melanocytes. Expressed abundantly in the stomach and is predominantly localized at the apical region of gastric-surface mucus cells. Also expressed in the thymus and lung.

It is found in the membrane. Its subcellular location is the melanosome. It localises to the late endosome. The protein localises to the lysosome. It carries out the reaction GTP + H2O = GDP + phosphate + H(+). With respect to regulation, regulated by guanine nucleotide exchange factors (GEFs) which promote the exchange of bound GDP for free GTP, GTPase activating proteins (GAPs) which increase the GTP hydrolysis activity, and GDP dissociation inhibitors which inhibit the dissociation of the nucleotide from the GTPase. Activated by GEFs such as DENND10. In terms of biological role, small GTPase which cycles between active GTP-bound and inactive GDP-bound states. In its active state, binds to a variety of effector proteins to regulate homeostasis of late endocytic pathway, including endosomal positioning, maturation and secretion. Plays a role in cytotoxic granule exocytosis in lymphocytes. Required for both granule maturation and granule docking and priming at the immunologic synapse. The protein is Ras-related protein Rab-27A (Rab27a) of Mus musculus (Mouse).